A 152-amino-acid chain; its full sequence is Ribosome maturation factor RimP (152 aa).

It belongs to the RimP family.

The protein localises to the cytoplasm. In terms of biological role, required for maturation of 30S ribosomal subunits. The sequence is that of Ribosome maturation factor RimP from Paraburkholderia phymatum (strain DSM 17167 / CIP 108236 / LMG 21445 / STM815) (Burkholderia phymatum).